The primary structure comprises 102 residues: Small ribosomal subunit protein uS10 (102 aa).

It belongs to the universal ribosomal protein uS10 family. As to quaternary structure, part of the 30S ribosomal subunit.

Functionally, involved in the binding of tRNA to the ribosomes. The polypeptide is Small ribosomal subunit protein uS10 (Lactobacillus helveticus (strain DPC 4571)).